The chain runs to 34 residues: Photosystem I reaction center subunit XII (34 aa).

A helical transmembrane segment spans residues 10–32; that stretch reads IYIALVVAAHAAILALRLSVSLY.

It belongs to the PsaM family.

Its subcellular location is the cellular thylakoid membrane. The sequence is that of Photosystem I reaction center subunit XII from Synechococcus sp. (strain RCC307).